A 557-amino-acid polypeptide reads, in one-letter code: uncharacterized protein (557 aa).

Residues 2–45 are a coiled coil; that stretch reads NEDETSILNKKMEKIEVEMAEFERLGAEREKEAVERIVQEENQN. Disordered stretches follow at residues 39-62, 101-127, 356-402, and 536-557; these read VQEE…KSRK, NRTY…RKNF, PSPS…YPSN, and ANAT…YDHI. Polar residues-rich tracts occupy residues 101-110, 358-380, 390-400, and 536-548; these read NRTYYKNSQG, PSFQ…SSNA, DSATYPTSIYP, and ANAT…NLDT.

It is found in the cytoplasm. It localises to the nucleus. This is an uncharacterized protein from Schizosaccharomyces pombe (strain 972 / ATCC 24843) (Fission yeast).